A 104-amino-acid polypeptide reads, in one-letter code: A-type ATP synthase subunit F (104 aa).

The protein belongs to the V-ATPase F subunit family. As to quaternary structure, has multiple subunits with at least A(3), B(3), C, D, E, F, H, I and proteolipid K(x).

It is found in the cell membrane. Functionally, component of the A-type ATP synthase that produces ATP from ADP in the presence of a proton gradient across the membrane. This Thermoplasma acidophilum (strain ATCC 25905 / DSM 1728 / JCM 9062 / NBRC 15155 / AMRC-C165) protein is A-type ATP synthase subunit F.